The following is a 130-amino-acid chain: kinetoplast-associated protein 2-1 (130 aa).

Positions 1 to 10 are excised as a propeptide; it reads MLRRTVSNFA. Residues 89-130 form a disordered region; it reads LTKKWNETKQAQREKAQKAQKKTKSAKSKVKKAAKKSKKSKK. Residues 92–105 show a composition bias toward basic and acidic residues; that stretch reads KWNETKQAQREKAQ. Positions 106-130 are enriched in basic residues; the sequence is KAQKKTKSAKSKVKKAAKKSKKSKK.

This sequence belongs to the KAP family. Associates with the kinetoplast DNA network.

It is found in the mitochondrion matrix. Its subcellular location is the kinetoplast. In terms of biological role, histone H1-like DNA-binding protein involved in the organization and segregation of kinetoplast DNA (kDNA). The mitochondrial DNA of kinetoplastid protozoa consists of about 5,000 minicircles and 20 to 30 maxicircles. These circular DNAs are held together by catenation into a highly organized compact disk structure referred to as a kinetoplast DNA (kDNA) network. Binds preferentially to a specific fragment of minicircle DNA and is able to compact kDNA networks through DNA charge neutralization and condensation. The protein is kinetoplast-associated protein 2-1 (KAP2-1) of Crithidia fasciculata.